The following is a 420-amino-acid chain: Serine hydroxymethyltransferase (420 aa).

Residues leucine 123 and glycine 127–leucine 129 each bind (6S)-5,6,7,8-tetrahydrofolate. Lysine 232 carries the N6-(pyridoxal phosphate)lysine modification. Serine 357–phenylalanine 359 contributes to the (6S)-5,6,7,8-tetrahydrofolate binding site.

The protein belongs to the SHMT family. In terms of assembly, homodimer. The cofactor is pyridoxal 5'-phosphate.

Its subcellular location is the cytoplasm. It carries out the reaction (6R)-5,10-methylene-5,6,7,8-tetrahydrofolate + glycine + H2O = (6S)-5,6,7,8-tetrahydrofolate + L-serine. Its pathway is one-carbon metabolism; tetrahydrofolate interconversion. It functions in the pathway amino-acid biosynthesis; glycine biosynthesis; glycine from L-serine: step 1/1. Catalyzes the reversible interconversion of serine and glycine with tetrahydrofolate (THF) serving as the one-carbon carrier. This reaction serves as the major source of one-carbon groups required for the biosynthesis of purines, thymidylate, methionine, and other important biomolecules. Also exhibits THF-independent aldolase activity toward beta-hydroxyamino acids, producing glycine and aldehydes, via a retro-aldol mechanism. This is Serine hydroxymethyltransferase from Streptococcus pyogenes serotype M2 (strain MGAS10270).